A 259-amino-acid polypeptide reads, in one-letter code: Borneol dehydrogenase, mitochondrial (259 aa).

The transit peptide at methionine 1–leucine 30 directs the protein to the mitochondrion. Residues serine 21–isoleucine 23, aspartate 42, aspartate 63–valine 64, and asparagine 90–glycine 92 contribute to the NAD(+) site. Catalysis depends on serine 144, which acts as the Proton donor. 2 residues coordinate substrate: serine 144 and tyrosine 157. NAD(+) is bound by residues tyrosine 157, lysine 161, and threonine 192. The active-site Proton acceptor is the tyrosine 157. The active-site Proton donor/acceptor is the lysine 161.

The protein belongs to the short-chain dehydrogenases/reductases (SDR) family. In terms of tissue distribution, specifically expressed in glandular trichomes of mature flowers.

The protein localises to the mitochondrion. It catalyses the reaction borneol + NAD(+) = camphor + NADH + H(+). It functions in the pathway secondary metabolite biosynthesis; terpenoid biosynthesis. Functionally, involved in the biosynthesis of monoterpenes natural products related to camphor. Catalyzes the conversion of borneol into camphor. The protein is Borneol dehydrogenase, mitochondrial of Lavandula x intermedia (Lavandin).